The primary structure comprises 365 residues: Sesquiterpene synthase 3 (365 aa).

Aspartate 117, asparagine 253, serine 257, and glutamate 261 together coordinate Mg(2+). The DDXXD motif motif lies at 117–121 (DDWSD). Positions 253 to 261 (NDILSYNRE) match the NSE/DTE motif motif. Positions 341 and 342 each coordinate (2E,6E)-farnesyl diphosphate.

The protein belongs to the terpene synthase family. Mg(2+) serves as cofactor.

The catalysed reaction is (2E,6E)-farnesyl diphosphate = delta-cadinene + diphosphate. Its function is as follows. Terpene cyclase that catalyzes the cyclization of farnesyl diphosphate (FPP) to various sesquiterpenes, including beta-elemene gamma-cadinene, delta-cadinene, and alpha-cadinene. This chain is Sesquiterpene synthase 3, found in Postia placenta (strain ATCC 44394 / Madison 698-R) (Brown rot fungus).